Here is a 183-residue protein sequence, read N- to C-terminus: Streptavidin (183 aa).

An N-terminal signal peptide occupies residues 1 to 24; sequence MRKIVVAAIAVSLTTVSITASASA. One can recognise an Avidin-like domain in the interval 37 to 159; that stretch reads AEAGITGTWY…GHDTFTKVKP (123 aa). The biotin site is built by Tyr-67 and Tyr-78. The Cell attachment site; atypical motif lies at 83–85; it reads RYD. Residues Trp-116, Trp-132, and Trp-144 each coordinate biotin.

The protein belongs to the avidin/streptavidin family. As to quaternary structure, homotetramer.

It localises to the secreted. Its function is as follows. The biological function of streptavidin is not known. Forms a strong non-covalent specific complex with biotin (one molecule of biotin per subunit of streptavidin). The protein is Streptavidin of Streptomyces avidinii.